A 371-amino-acid polypeptide reads, in one-letter code: Aminomethyltransferase (371 aa).

Belongs to the GcvT family. In terms of assembly, the glycine cleavage system is composed of four proteins: P, T, L and H.

The enzyme catalyses N(6)-[(R)-S(8)-aminomethyldihydrolipoyl]-L-lysyl-[protein] + (6S)-5,6,7,8-tetrahydrofolate = N(6)-[(R)-dihydrolipoyl]-L-lysyl-[protein] + (6R)-5,10-methylene-5,6,7,8-tetrahydrofolate + NH4(+). In terms of biological role, the glycine cleavage system catalyzes the degradation of glycine. The sequence is that of Aminomethyltransferase from Oceanobacillus iheyensis (strain DSM 14371 / CIP 107618 / JCM 11309 / KCTC 3954 / HTE831).